The chain runs to 232 residues: MTFSVTILTIFPEMFPGFLNYSLAGKALEKKIWNLEIVNIRSFAKDKHSTVDDVPYGGGAGMVMRPDVIGNAVDNVLSAHKNTRFIYMTPSGTKFNQRIAKELTEIPHVTILCGRFEGVDQRVIDVYTPYELSIGDYILSGGEPAAMVVLDACIRLLPGVVNNFDSVAEESFSYSGGILEYPQYTRPEQWSRYKVPEVLLSGNHRKISDWRREQSYVRTKERRPELLNGDDK.

Residues Gly114 and Ile134–Leu139 each bind S-adenosyl-L-methionine.

This sequence belongs to the RNA methyltransferase TrmD family. In terms of assembly, homodimer.

It is found in the cytoplasm. The catalysed reaction is guanosine(37) in tRNA + S-adenosyl-L-methionine = N(1)-methylguanosine(37) in tRNA + S-adenosyl-L-homocysteine + H(+). Functionally, specifically methylates guanosine-37 in various tRNAs. The protein is tRNA (guanine-N(1)-)-methyltransferase of Wolbachia pipientis subsp. Culex pipiens (strain wPip).